The primary structure comprises 344 residues: uncharacterized protein (344 aa).

Transmembrane regions (helical) follow at residues isoleucine 155–valine 175, tryptophan 181–tryptophan 201, leucine 221–phenylalanine 241, isoleucine 254–leucine 274, phenylalanine 291–valine 311, and alanine 319–phenylalanine 339.

It to M.jannaschii MJ1032.

The protein localises to the cell membrane. This is an uncharacterized protein from Archaeoglobus fulgidus (strain ATCC 49558 / DSM 4304 / JCM 9628 / NBRC 100126 / VC-16).